A 1113-amino-acid chain; its full sequence is uncharacterized protein (1113 aa).

An ATP-binding site is contributed by 313–320; it reads GPPGTGKS.

This sequence belongs to the DNA2/NAM7 helicase family.

This is an uncharacterized protein from Mycoplasma pneumoniae (strain ATCC 29342 / M129 / Subtype 1) (Mycoplasmoides pneumoniae).